The following is a 361-amino-acid chain: Phospho-N-acetylmuramoyl-pentapeptide-transferase (361 aa).

Helical transmembrane passes span 26-46 (AILGILTALLISLVIGPVMIR), 73-93 (TMGGALILVAIAISTLLWADL), 97-117 (YVWVVLLVTLLFGAIGWVDDY), 134-154 (YFWQSVIGATAAIVLYVTASM), 168-188 (VSLTLGPVLFILLTYFVIVGS), 200-220 (GLAIMPTVMVAGALAIFAYLS), 237-257 (TGELIIFCGALVGAGLGFLWF), 264-284 (VFMGDVGALALGAALGTVAVI), 289-309 (IVLFIMGGVFVMETISVILQV), and 340-360 (IVRFWVVTVVLVLIGLASLKI).

Belongs to the glycosyltransferase 4 family. MraY subfamily. Mg(2+) serves as cofactor.

It localises to the cell inner membrane. The catalysed reaction is UDP-N-acetyl-alpha-D-muramoyl-L-alanyl-gamma-D-glutamyl-meso-2,6-diaminopimeloyl-D-alanyl-D-alanine + di-trans,octa-cis-undecaprenyl phosphate = di-trans,octa-cis-undecaprenyl diphospho-N-acetyl-alpha-D-muramoyl-L-alanyl-D-glutamyl-meso-2,6-diaminopimeloyl-D-alanyl-D-alanine + UMP. The protein operates within cell wall biogenesis; peptidoglycan biosynthesis. Catalyzes the initial step of the lipid cycle reactions in the biosynthesis of the cell wall peptidoglycan: transfers peptidoglycan precursor phospho-MurNAc-pentapeptide from UDP-MurNAc-pentapeptide onto the lipid carrier undecaprenyl phosphate, yielding undecaprenyl-pyrophosphoryl-MurNAc-pentapeptide, known as lipid I. The protein is Phospho-N-acetylmuramoyl-pentapeptide-transferase of Marinobacter nauticus (strain ATCC 700491 / DSM 11845 / VT8) (Marinobacter aquaeolei).